The following is a 341-amino-acid chain: L-threonine 3-dehydrogenase (341 aa).

C38 is a binding site for Zn(2+). Residues T40 and H43 each act as charge relay system in the active site. Residues H63, E64, C93, C96, C99, and C107 each coordinate Zn(2+). NAD(+) is bound by residues I175, D195, R200, 262–264 (LGI), and 286–287 (IY).

The protein belongs to the zinc-containing alcohol dehydrogenase family. Homotetramer. It depends on Zn(2+) as a cofactor.

Its subcellular location is the cytoplasm. It carries out the reaction L-threonine + NAD(+) = (2S)-2-amino-3-oxobutanoate + NADH + H(+). It participates in amino-acid degradation; L-threonine degradation via oxydo-reductase pathway; glycine from L-threonine: step 1/2. Its function is as follows. Catalyzes the NAD(+)-dependent oxidation of L-threonine to 2-amino-3-ketobutyrate. This is L-threonine 3-dehydrogenase from Shigella dysenteriae serotype 1 (strain Sd197).